The chain runs to 91 residues: Probable protein E5A (91 aa).

Belongs to the papillomaviridae E5A protein family.

In Human papillomavirus type 6b, this protein is Probable protein E5A.